The chain runs to 341 residues: Cell division protein FtsX (341 aa).

The disordered stretch occupies residues 1-34; sequence MSTTRTPKVSERVAPKPADPQPAKKKRGEDDDGP. The Cytoplasmic segment spans residues 1–65; the sequence is MSTTRTPKVS…RRLGKQPIGS (65 aa). A helical membrane pass occupies residues 66–86; that stretch reads FFTCLVMAVALSMPMGLSLLL. The Periplasmic segment spans residues 87 to 212; it reads KNIEQLGGSW…LAAILKLGDR (126 aa). The helical transmembrane segment at 213–233 threads the bilayer; that stretch reads FVFGLAVMLISALLLVIGNTI. Residues 234–263 lie on the Cytoplasmic side of the membrane; it reads RLHIENRRIEIEVIKLVGGTDAYVRRPFLY. Residues 264–284 form a helical membrane-spanning segment; the sequence is MGALYGLGAGLLAWGILAFGL. Residues 285 to 311 are Periplasmic-facing; sequence NWLNEAVVGLSGLYGSDFALGGVPASD. A helical membrane pass occupies residues 312-332; it reads GLSLLIGAVLLGYIGAWIAVA. Residues 333–341 are Cytoplasmic-facing; that stretch reads RHLNELAPR.

This sequence belongs to the ABC-4 integral membrane protein family. FtsX subfamily. Forms a membrane-associated complex with FtsE.

It is found in the cell inner membrane. In terms of biological role, part of the ABC transporter FtsEX involved in cellular division. The protein is Cell division protein FtsX of Pseudomonas putida (Arthrobacter siderocapsulatus).